Reading from the N-terminus, the 394-residue chain is NAD(P)H-quinone oxidoreductase subunit H (394 aa).

The protein belongs to the complex I 49 kDa subunit family. As to quaternary structure, NDH-1 can be composed of about 15 different subunits; different subcomplexes with different compositions have been identified which probably have different functions.

The protein resides in the cellular thylakoid membrane. The catalysed reaction is a plastoquinone + NADH + (n+1) H(+)(in) = a plastoquinol + NAD(+) + n H(+)(out). It carries out the reaction a plastoquinone + NADPH + (n+1) H(+)(in) = a plastoquinol + NADP(+) + n H(+)(out). NDH-1 shuttles electrons from an unknown electron donor, via FMN and iron-sulfur (Fe-S) centers, to quinones in the respiratory and/or the photosynthetic chain. The immediate electron acceptor for the enzyme in this species is believed to be plastoquinone. Couples the redox reaction to proton translocation, and thus conserves the redox energy in a proton gradient. Cyanobacterial NDH-1 also plays a role in inorganic carbon-concentration. In Microcystis aeruginosa (strain NIES-843 / IAM M-2473), this protein is NAD(P)H-quinone oxidoreductase subunit H.